Reading from the N-terminus, the 356-residue chain is Cysteine proteinase 3 (356 aa).

An N-terminal signal peptide occupies residues 1 to 16; the sequence is MSRLSLVLILVAGLFA. Positions 17 to 138 are cleaved as a propeptide — activation peptide; sequence TALAGPATFA…KGNLKLTNVV (122 aa). Asn123 is a glycosylation site (N-linked (GlcNAc...) asparagine). Disulfide bonds link Cys160-Cys203 and Cys194-Cys236. The active site involves Cys163. N-linked (GlcNAc...) asparagine glycosylation is present at Asn252. An intrachain disulfide couples Cys294 to Cys344. Residues His303 and Asn323 contribute to the active site.

This sequence belongs to the peptidase C1 family. In terms of tissue distribution, predominantly expressed in stem and root.

It localises to the vacuole. This Solanum lycopersicum (Tomato) protein is Cysteine proteinase 3 (CYP-3).